A 267-amino-acid polypeptide reads, in one-letter code: Urease accessory protein UreD 2 (267 aa).

The protein belongs to the UreD family. UreD, UreF and UreG form a complex that acts as a GTP-hydrolysis-dependent molecular chaperone, activating the urease apoprotein by helping to assemble the nickel containing metallocenter of UreC. The UreE protein probably delivers the nickel.

It is found in the cytoplasm. Functionally, required for maturation of urease via the functional incorporation of the urease nickel metallocenter. This Synechococcus sp. (strain JA-3-3Ab) (Cyanobacteria bacterium Yellowstone A-Prime) protein is Urease accessory protein UreD 2.